The following is a 430-amino-acid chain: Enolase (430 aa).

Q163 serves as a coordination point for (2R)-2-phosphoglycerate. The Proton donor role is filled by E205. D242, E288, and D315 together coordinate Mg(2+). The (2R)-2-phosphoglycerate site is built by K340, R369, S370, and K391. The active-site Proton acceptor is K340.

It belongs to the enolase family. Requires Mg(2+) as cofactor.

The protein resides in the cytoplasm. It is found in the secreted. It localises to the cell surface. The catalysed reaction is (2R)-2-phosphoglycerate = phosphoenolpyruvate + H2O. It participates in carbohydrate degradation; glycolysis; pyruvate from D-glyceraldehyde 3-phosphate: step 4/5. Catalyzes the reversible conversion of 2-phosphoglycerate (2-PG) into phosphoenolpyruvate (PEP). It is essential for the degradation of carbohydrates via glycolysis. In Acidobacterium capsulatum (strain ATCC 51196 / DSM 11244 / BCRC 80197 / JCM 7670 / NBRC 15755 / NCIMB 13165 / 161), this protein is Enolase.